We begin with the raw amino-acid sequence, 871 residues long: Protein TIC 100 (871 aa).

Residues 1 to 85 are disordered; the sequence is MANEELTESQ…NANPETNIRR (85 aa). Polar residues predominate over residues 8-20; that stretch reads ESQQQEDPSQQLP. Residues 30–46 show a composition bias toward low complexity; that stretch reads SDSNSDSDASSQSSGDD. MORN repeat units lie at residues 219–239, 243–257, and 337–352; these read YEGTVWDDLAQGKGVYIAENG, YEGEWLQNDMEGHGV, and YAGQWKHSRMHGCGVY. Asn238 is modified (deamidated asparagine). Positions 587-647 form a coiled coil; it reads MLDGLEKWTE…QEEEKKTEMG (61 aa). Disordered stretches follow at residues 631 to 654 and 669 to 721; these read EELKKKEQEEEKKTEMGLTEEDED and KEKI…NSPF. The segment covering 632–645 has biased composition (basic and acidic residues); it reads ELKKKEQEEEKKTE. A Phosphothreonine modification is found at Thr649. The segment covering 669–683 has biased composition (basic and acidic residues); it reads KEKIQENKQEEKYKD. Residues 684–704 are compositionally biased toward acidic residues; the sequence is DDDEDDDDGDDDDDDDDDDDL.

Part of the Tic complex. Component of the 1-MD complex, composed of TIC20-I, TIC214, TIC100 and TIC56. Interacts with the translocating preproteins. Hydrolysis of ATP is essential for the formation of this complex. The 1-MD complex interacts with TIC21. Preferentially expressed in ovules, and moderately expressed in leaves and siliques.

Its subcellular location is the plastid. It localises to the chloroplast inner membrane. Its function is as follows. Involved in protein precursor import into chloroplasts. May be part of an intermediate translocation complex acting as a protein-conducting channel at the inner envelope. Plays an important role during embryogenesis and chloroplast biogenesis. The chain is Protein TIC 100 from Arabidopsis thaliana (Mouse-ear cress).